We begin with the raw amino-acid sequence, 252 residues long: O-methyltransferase hkm8 (252 aa).

S-adenosyl-L-methionine is bound by residues glutamate 73, 75–76 (GT), serine 81, and aspartate 100.

Belongs to the class I-like SAM-binding methyltransferase superfamily. Cation-dependent O-methyltransferase family.

It participates in secondary metabolite biosynthesis. Its function is as follows. O-methyltransferase; part of the gene cluster that mediates the biosynthesis of hancockiamides, an unusual new family of N-cinnamoylated piperazines. The NRPS hkm10 and the NmrA-like reductase hkm9 are proposed to convert two molecules of L-Phe to the intermediary piperazine called xenocockiamide A. Xenocockiamide A is then converted to hancockiamide D via a series of hydroxylations and O-methylations. The tyrosinase hkm6 may catalyze an aromatic hydroxylation, then the 2-oxoglutarate-dependent Fe(II) dioxygenase hkm4 and the FAD-dependent phenol hydroxylase hkm7 may catalyze consecutive hydroxylations to install 2 more hydroxy groups, and the methyltransferase hkm8 probably catalyzes two methylations using 2 molecules of S-adenosyl-L-methionine (SAM). The NRPS hkm11 activates and transfers trans-cinnamate supplied by the PAL hkm12 to hancockiamide D and produces hancockiamide A. NRPS Hkm11 has the flexibility to tolerate the bulky hancockiamide G as a substrate and the absence of the acetyl-transferase hkm3 opens up the opportunity for hkm11 to introduce a second N-cinnamoyl moiety. The cytochrome P450 monooxygenase hkm5 catalyzes the methylenedioxy bridge formation, converting hancockiamide A into hancockiamide G. Hkm5 can also convert hancockiamide B into hancockiamide C, and hancockiamide D into hancockiamide H. The N-acetyltransferase hkm3 finally transfers an acetyl group to 1-N of piperazine, converting hancockiamide A into hancockiamide B and hancockiamide G into hancockiamide C. This Aspergillus hancockii protein is O-methyltransferase hkm8.